The chain runs to 732 residues: E3 ubiquitin-protein ligase RNF19B (732 aa).

Positions 1-109 are disordered; it reads MGSEKDSESP…PEEDEAAEGG (109 aa). Residues 1 to 315 form a required for ubiquitin ligase activity and for protection against staurosporin-induced cell death region; the sequence is MGSEKDSESP…VCGCEFCWLC (315 aa). The span at 54-71 shows a compositional bias: pro residues; it reads AEPPPPAAPPPPPPPAPA. Residues 72–99 show a composition bias toward low complexity; the sequence is PVEAQAPPVEALPSEPAAEAEAEAVAAG. The span at 100 to 109 shows a compositional bias: acidic residues; sequence PEEDEAAEGG. The segment at 112 to 334 is TRIAD supradomain; sequence EEVECPLCLV…LSPSGCTFWG (223 aa). Cys116, Cys119, Cys139, Cys142, Cys203, Cys208, Cys225, Cys230, Cys235, Cys238, His243, Cys248, Cys284, and Cys287 together coordinate Zn(2+). An RING-type 1 zinc finger spans residues 116–165; it reads CPLCLVRLPPERAPRLLSCPHRSCRDCLRHYLRLEISESRVPISCPECSE. The IBR-type zinc finger occupies 183-248; that stretch reads HKYEEFMLRR…KQIWHPNQTC (66 aa). The RING-type 2; atypical zinc-finger motif lies at 284-315; sequence CPRCSAYIIKMNDGSCNHMTCAVCGCEFCWLC. Cys299 is an active-site residue. Zn(2+)-binding residues include Cys304, Cys307, Cys312, Cys315, His323, and Cys330. 2 consecutive transmembrane segments (helical) span residues 351 to 371 and 412 to 432; these read LIGA…AMVI and VIAA…VYGV. Disordered regions lie at residues 598–644 and 660–732; these read QLVS…QSCE and QPES…YEVE. The span at 674 to 683 shows a compositional bias: acidic residues; it reads QSDDVPDITS.

Belongs to the RBR family. RNF19 subfamily. As to quaternary structure, interacts with UBE2L3, UBE2L6 and UCKL1. Expressed specifically in natural killer cells, activated macrophages and cytotoxic T-cells. Present in macrophages (at protein level). Ubiquitously expressed with high expression in testis.

The protein resides in the cytoplasmic granule membrane. Its subcellular location is the endoplasmic reticulum membrane. The catalysed reaction is [E2 ubiquitin-conjugating enzyme]-S-ubiquitinyl-L-cysteine + [acceptor protein]-L-lysine = [E2 ubiquitin-conjugating enzyme]-L-cysteine + [acceptor protein]-N(6)-ubiquitinyl-L-lysine.. It functions in the pathway protein modification; protein ubiquitination. Functionally, E3 ubiquitin-protein ligase which accepts ubiquitin from E2 ubiquitin-conjugating enzymes UBE2L3 and UBE2L6 in the form of a thioester and then directly transfers the ubiquitin to targeted substrates, such as UCKL1. Involved in the cytolytic activity of natural killer cells and cytotoxic T-cells. Protects against staurosporin-induced cell death. This is E3 ubiquitin-protein ligase RNF19B (Rnf19b) from Mus musculus (Mouse).